A 546-amino-acid polypeptide reads, in one-letter code: UDP-glycosyltransferase FPY2 (546 aa).

A signal peptide spans Met1 to Ser20. The chain crosses the membrane as a helical span at residues Leu517 to Thr537.

The protein belongs to the glycosyltransferase 28 family.

Its subcellular location is the membrane. Its pathway is secondary metabolite biosynthesis. Its function is as follows. UDP-glycosyltransferase; part of the gene cluster that mediates the biosynthesis of the gamma-pyrones fusapyrone (FPY) and deoxyfusapyrone (dFPY). FPY is an undecaketide and thus likely synthesized by the polyketide synthase FPY1 from acetyl-CoA functioning as starter unit and the addition of 10 malonyl-CoA extender units by successive Claisen-condensations. Next to this, FPY shares some rare features: C-glycosylated 4-deoxyglucose at C-3, a gem-dimethyl group at C-13, and an alpha-beta to beta-gamma double bond shift at C-20. During FPY biosynthesis mono-C-methyl groups are transferred to the tetra-, penta-, hexa- and heptaketide, while two C-methyl groups are transferred to the nonaketide, suggesting that the CMet domain is programmed to selectively catalyze two successive C-alpha-methylation reactions of the nonaketide, while other alpha-carbons are non- or mono-methylated only. While the origin of the 4'-deoxyglucose moiety remains opaque, its transfer to C-3 is most likely mediated by the C-glycosyltransferase FPY2. Next to this, the hydroxyl group present at C-33 and discriminating between FPY and dFPY, is likely to be installed by the cytochrome P450 monooxygenase FPY7. No putative function can be predicted for the remaining genes FPY3-FPY6. This Fusarium mangiferae (Mango malformation disease fungus) protein is UDP-glycosyltransferase FPY2.